The sequence spans 88 residues: Secretion system apparatus protein SsaS (88 aa).

A run of 2 helical transmembrane segments spans residues 15–35 (WIVLFTSMPVVLVASVVGVIV) and 55–75 (LLAIAITLMVSYPWLSGILLN).

It belongs to the FliQ/MopD/SpaQ family.

Its subcellular location is the cell membrane. Its function is as follows. Part of a type III secretion system. The polypeptide is Secretion system apparatus protein SsaS (ssaS) (Salmonella typhimurium (strain LT2 / SGSC1412 / ATCC 700720)).